The primary structure comprises 127 residues: MATVSRKKKKVKVTPEGAVHIKASFNNIMVTITDVQGNTVSWSSAGKNGFKGSKKNTPYASQVTSEAAAKEAFDLGMRHVHVFIKGPGAGRDAAIRALQGAGLEVRTIKDITPLPHNGCRPPKRRRV.

Belongs to the universal ribosomal protein uS11 family. Part of the 30S ribosomal subunit. Interacts with proteins S7 and S18. Binds to IF-3.

Functionally, located on the platform of the 30S subunit, it bridges several disparate RNA helices of the 16S rRNA. Forms part of the Shine-Dalgarno cleft in the 70S ribosome. This Chlorobium chlorochromatii (strain CaD3) protein is Small ribosomal subunit protein uS11.